A 534-amino-acid polypeptide reads, in one-letter code: Cytokinin dehydrogenase 1 (534 aa).

Positions 1–18 (MAVVYYLLLAGLIACSHA) are cleaved as a signal peptide. Residues Asn52, Asn63, and Asn89 are each glycosylated (N-linked (GlcNAc...) asparagine). The 181-residue stretch at 65–245 (TSALPAAVLY…TRARIAVEPA (181 aa)) folds into the FAD-binding PCMH-type domain. FAD-binding residues include Phe100, Gly102, Arg103, and Gly104. His105 bears the Pros-8alpha-FAD histidine mark. The FAD site is built by Ser106 and Gln110. N-linked (GlcNAc...) asparagine glycosylation is present at Asn134. The FAD site is built by Asp169, Thr174, Ser180, Ile184, and Ile235. Asp169 provides a ligand contact to N(6)-dimethylallyladenine. Residue Asp169 participates in trans-zeatin binding. Residues Asn294, Asn323, and Asn338 are each glycosylated (N-linked (GlcNAc...) asparagine). A N(6)-dimethylallyladenine-binding site is contributed by Glu381. Glu381 is a binding site for trans-zeatin. A glycan (N-linked (GlcNAc...) asparagine) is linked at Asn434. Ser456 is a trans-zeatin binding site. Tyr491, Ser527, and Gln530 together coordinate FAD.

It belongs to the oxygen-dependent FAD-linked oxidoreductase family. In terms of assembly, monomer. It depends on FAD as a cofactor. Post-translationally, glycosylated; with approximately 10 hexose residues per site. As to expression, expressed in immature kernels and unpollinated cobs. Weakly expressed in kernels harvested two weeks after anthesis.

The protein localises to the secreted. Its subcellular location is the extracellular space. It catalyses the reaction N(6)-dimethylallyladenine + A + H2O = 3-methyl-2-butenal + adenine + AH2. Competitive inhibition by phenylureas. Its function is as follows. Catalyzes the oxidation of cytokinins, a family of N(6)-substituted adenine derivatives that are plant hormones, where the substituent is an isopentenyl group. Cleaves trans-zeatin, N(6)-dimethylallyladenine (isopentenyladenine), isopentenyladenosine, zeatin riboside and cis-zeatin, but not dihydrozeatin, kinetin and benzylaminopurine. The sequence is that of Cytokinin dehydrogenase 1 (CKX1) from Zea mays (Maize).